The primary structure comprises 198 residues: Segregation and condensation protein B (198 aa).

Residues 167 to 198 (PKLADPEADDPDQNEMDLFFDRFNQSKEQEEE) form a disordered region. Residues 172-181 (PEADDPDQNE) show a composition bias toward acidic residues.

The protein belongs to the ScpB family. Homodimer. Homodimerization may be required to stabilize the binding of ScpA to the Smc head domains. Component of a cohesin-like complex composed of ScpA, ScpB and the Smc homodimer, in which ScpA and ScpB bind to the head domain of Smc. The presence of the three proteins is required for the association of the complex with DNA.

The protein resides in the cytoplasm. In terms of biological role, participates in chromosomal partition during cell division. May act via the formation of a condensin-like complex containing Smc and ScpA that pull DNA away from mid-cell into both cell halves. The sequence is that of Segregation and condensation protein B from Listeria welshimeri serovar 6b (strain ATCC 35897 / DSM 20650 / CCUG 15529 / CIP 8149 / NCTC 11857 / SLCC 5334 / V8).